Consider the following 457-residue polypeptide: Serine--tRNA ligase (457 aa).

Residue 252 to 254 (TAE) participates in L-serine binding. ATP contacts are provided by residues 283–285 (RKE) and Val299. Glu306 contacts L-serine. Residue 370–373 (EMVS) coordinates ATP. Residue Thr406 participates in L-serine binding.

This sequence belongs to the class-II aminoacyl-tRNA synthetase family. Type-1 seryl-tRNA synthetase subfamily. As to quaternary structure, homodimer. The tRNA molecule binds across the dimer.

It is found in the cytoplasm. The catalysed reaction is tRNA(Ser) + L-serine + ATP = L-seryl-tRNA(Ser) + AMP + diphosphate + H(+). The enzyme catalyses tRNA(Sec) + L-serine + ATP = L-seryl-tRNA(Sec) + AMP + diphosphate + H(+). It functions in the pathway aminoacyl-tRNA biosynthesis; selenocysteinyl-tRNA(Sec) biosynthesis; L-seryl-tRNA(Sec) from L-serine and tRNA(Sec): step 1/1. In terms of biological role, catalyzes the attachment of serine to tRNA(Ser). Is also able to aminoacylate tRNA(Sec) with serine, to form the misacylated tRNA L-seryl-tRNA(Sec), which will be further converted into selenocysteinyl-tRNA(Sec). This chain is Serine--tRNA ligase, found in Saccharolobus islandicus (strain Y.G.57.14 / Yellowstone #1) (Sulfolobus islandicus).